We begin with the raw amino-acid sequence, 786 residues long: Constitutive coactivator of peroxisome proliferator-activated receptor gamma (786 aa).

A mediates transactivation of PPARG region spans residues 1–561; that stretch reads MGVRGLQGFV…GTPSLEVLWL (561 aa). Disordered stretches follow at residues 371-413 and 738-786; these read PNQE…KLPS and HWDS…WRRY. Polar residues predominate over residues 750 to 771; it reads QGYSSYRTDSTHGHSGQSWRNQ.

Belongs to the constitutive coactivator of PPAR-gamma family. In terms of assembly, interacts with ESR1 and RXRA. Interacts with PPARG; in a ligand-independent manner. In terms of tissue distribution, ubiquitously expressed (at protein level).

The protein localises to the nucleus. Its function is as follows. Functions as a transactivator of PPARG and ESR1. Functions in adipogenesis through PPARG activation. The sequence is that of Constitutive coactivator of peroxisome proliferator-activated receptor gamma (Fam120b) from Mus musculus (Mouse).